The following is a 71-amino-acid chain: Cruzioseptin-2 (71 aa).

An N-terminal signal peptide occupies residues 1–22; the sequence is MAFLKKSLFLVLFLGLVSLSIC. A propeptide spanning residues 23–43 is cleaved from the precursor; that stretch reads EEEKREEENEEVQEDDDQSEE. Glutamine amide is present on glutamine 68. Residues 70–71 constitute a propeptide that is removed on maturation; the sequence is EQ.

In terms of tissue distribution, expressed by the skin glands.

Its subcellular location is the secreted. Functionally, has antimicrobial activity against Gram-negative bacterium E.coli (MIC=26.35 uM), against Gram-positive bacterium S.aureus (MIC=6.59 uM) and against fungus C.albicans (MIC=13.18 uM). At higher concentrations also has a bactericidal and fungicidal effect. Has hemagglutinating activity against horse erythrocytes. The sequence is that of Cruzioseptin-2 from Cruziohyla calcarifer (Splendid leaf frog).